The primary structure comprises 388 residues: Beta-1,4-galactosyltransferase 5 (388 aa).

Over 1 to 14 (MRARRGLLRLPRRS) the chain is Cytoplasmic. Residues 15-35 (LLAALFFFSLSSSLLYFVYVA) traverse the membrane as a helical; Signal-anchor for type II membrane protein segment. Over 36-388 (PGIVNTYLFM…TPELAQVNEY (353 aa)) the chain is Lumenal. Residues N77, N81, N90, N111, and N128 are each glycosylated (N-linked (GlcNAc...) asparagine). Cysteines 114 and 158 form a disulfide. UDP-alpha-D-galactose is bound by residues 169–173 (PFRNR), 208–210 (FNR), 235–236 (VD), Y264, and W296. C229 and C248 are disulfide-bonded. D236 provides a ligand contact to Mn(2+). Residue 298-301 (GEDD) participates in N-acetyl-D-glucosamine binding. H329 provides a ligand contact to Mn(2+). Residue 329-330 (HH) participates in UDP-alpha-D-galactose binding. R340 serves as a coordination point for N-acetyl-D-glucosamine. N-linked (GlcNAc...) asparagine glycans are attached at residues N364 and N373.

This sequence belongs to the glycosyltransferase 7 family. Mn(2+) serves as cofactor. Ubiquitously expressed.

The protein localises to the golgi apparatus. Its subcellular location is the golgi stack membrane. It catalyses the reaction a beta-D-glucosyl-(1&lt;-&gt;1')-N-acylsphing-4-enine + UDP-alpha-D-galactose = a beta-D-Gal-(1-&gt;4)-beta-D-Glc-(1&lt;-&gt;1)-Cer(d18:1(4E)) + UDP + H(+). It functions in the pathway protein modification; protein glycosylation. It participates in sphingolipid metabolism. Functionally, catalyzes the synthesis of lactosylceramide (LacCer) via the transfer of galactose from UDP-galactose to glucosylceramide (GlcCer). LacCer is the starting point in the biosynthesis of all gangliosides (membrane-bound glycosphingolipids) which play pivotal roles in the CNS including neuronal maturation and axonal and myelin formation. Plays a role in the glycosylation of BMPR1A and regulation of its protein stability. Essential for extraembryonic development during early embryogenesis. In Homo sapiens (Human), this protein is Beta-1,4-galactosyltransferase 5.